Consider the following 35-residue polypeptide: UPF0387 membrane protein YohO (35 aa).

The chain crosses the membrane as a helical span at residues 6–26 (IGVIALFLLMAIGGIGGVMLA).

This sequence belongs to the UPF0387 family.

It is found in the cell inner membrane. This chain is UPF0387 membrane protein YohO, found in Salmonella paratyphi A (strain ATCC 9150 / SARB42).